A 473-amino-acid polypeptide reads, in one-letter code: Photosystem II CP43 reaction center protein (473 aa).

Residues 1–14 (MKTLYSLRRFYPVE) constitute a propeptide that is removed on maturation. Thr-15 carries the post-translational modification N-acetylthreonine. Thr-15 carries the phosphothreonine modification. A run of 5 helical transmembrane segments spans residues 69-93 (LFEV…PHLA), 134-155 (LLGP…KDRN), 178-200 (KALY…RKIT), 255-275 (KPFA…LSYS), and 291-312 (WFNN…ASQA). Glu-367 is a [CaMn4O5] cluster binding site. Residues 447–471 (RARAAAAGFEKGIDRDFEPVLSMTP) traverse the membrane as a helical segment.

Belongs to the PsbB/PsbC family. PsbC subfamily. PSII is composed of 1 copy each of membrane proteins PsbA, PsbB, PsbC, PsbD, PsbE, PsbF, PsbH, PsbI, PsbJ, PsbK, PsbL, PsbM, PsbT, PsbX, PsbY, PsbZ, Psb30/Ycf12, at least 3 peripheral proteins of the oxygen-evolving complex and a large number of cofactors. It forms dimeric complexes. The cofactor is Binds multiple chlorophylls and provides some of the ligands for the Ca-4Mn-5O cluster of the oxygen-evolving complex. It may also provide a ligand for a Cl- that is required for oxygen evolution. PSII binds additional chlorophylls, carotenoids and specific lipids..

The protein resides in the plastid. The protein localises to the chloroplast thylakoid membrane. In terms of biological role, one of the components of the core complex of photosystem II (PSII). It binds chlorophyll and helps catalyze the primary light-induced photochemical processes of PSII. PSII is a light-driven water:plastoquinone oxidoreductase, using light energy to abstract electrons from H(2)O, generating O(2) and a proton gradient subsequently used for ATP formation. The polypeptide is Photosystem II CP43 reaction center protein (Morus indica (Mulberry)).